The chain runs to 521 residues: GMP synthase [glutamine-hydrolyzing] (521 aa).

A Glutamine amidotransferase type-1 domain is found at 8-203 (KILILDFGAQ…VVDICGCQTL (196 aa)). Residue cysteine 85 is the Nucleophile of the active site. Active-site residues include histidine 177 and glutamate 179. The 193-residue stretch at 204 to 396 (WTAANIIDDQ…LGLPRTMVYR (193 aa)) folds into the GMPS ATP-PPase domain. ATP is bound at residue 231–237 (SGGVDSS).

In terms of assembly, homodimer.

The enzyme catalyses XMP + L-glutamine + ATP + H2O = GMP + L-glutamate + AMP + diphosphate + 2 H(+). Its pathway is purine metabolism; GMP biosynthesis; GMP from XMP (L-Gln route): step 1/1. Its function is as follows. Catalyzes the synthesis of GMP from XMP. The polypeptide is GMP synthase [glutamine-hydrolyzing] (Xanthomonas oryzae pv. oryzae (strain PXO99A)).